The chain runs to 419 residues: UPF0229 protein Tbd_1233 (419 aa).

Positions 85–108 (GDRIDRPAGEGGGGSGGSPDGEGM) are disordered. The span at 93–104 (GEGGGGSGGSPD) shows a compositional bias: gly residues.

It belongs to the UPF0229 family.

The protein is UPF0229 protein Tbd_1233 of Thiobacillus denitrificans (strain ATCC 25259 / T1).